A 905-amino-acid chain; its full sequence is Respiratory burst oxidase homolog protein B (905 aa).

Disordered regions lie at residues 1 to 46 (MADL…KTAR) and 69 to 134 (EVRG…VRKR). Residues 1 to 355 (MADLEAGMVA…MYFLEENWKR (355 aa)) lie on the Cytoplasmic side of the membrane. Residues 29 to 44 (IPNSGNLGSSNRSTKT) are compositionally biased toward polar residues. A compositionally biased stretch (gly residues) spans 75 to 84 (EGGSGHGTGF). Polar residues predominate over residues 91–108 (SPSSKSGKLTSKLRQVTN). EF-hand-like stretches follow at residues 172 to 180 (QVDGVLLRS) and 206 to 217 (RGIVKQVLTKDE). 2 EF-hand domains span residues 229–264 (GFDN…SASA) and 273–308 (RADE…SPSE). 5 residues coordinate Ca(2+): D242, N244, D246, R248, and E253. A helical membrane pass occupies residues 356–376 (SWVMTLWISICIALFIWKFIQ). Residues 377–440 (YRNRAVFGIM…FNDNINFHKV (64 aa)) lie on the Extracellular side of the membrane. Positions 395 to 551 (GAAETLKFNM…HLFVIVYTLL (157 aa)) constitute a Ferric oxidoreductase domain. A helical transmembrane segment spans residues 441-461 (IAAGVAVGVALHAGAHLTCDF). The Cytoplasmic segment spans residues 462–496 (PRLLHASDAQYELMKPFFGEKRPPNYWWFVKGTEG). A helical membrane pass occupies residues 497–517 (WTGVVMVVLMAIAFTLAQPWF). At 518–539 (RRNKLKDSNPLKKMTGFNAFWF) the chain is on the extracellular side. Residues 540 to 560 (THHLFVIVYTLLFVHGTCLYL) form a helical membrane-spanning segment. The Cytoplasmic segment spans residues 561–568 (SRKWYKKT). The chain crosses the membrane as a helical span at residues 569–586 (TWMYLAVPVVLYVSERIL). The FAD-binding FR-type domain maps to 587–715 (RLFRSHDAVG…DGPYGAPAQD (129 aa)). The Extracellular portion of the chain corresponds to 587–717 (RLFRSHDAVG…PYGAPAQDYR (131 aa)). A helical transmembrane segment spans residues 718-738 (EYDVLLLIGLGIGATPLISIV). The Cytoplasmic portion of the chain corresponds to 739-905 (KDVLNHIQGE…TRFDFHKENF (167 aa)).

Belongs to the RBOH (TC 5.B.1.3) family. In terms of assembly, monomer and homodimer, stabilized by swapping the EF-hand motifs. Interacts with GTP-bound RAC1.

The protein localises to the membrane. Its function is as follows. Calcium-dependent NADPH oxidase that generates superoxide. This Oryza sativa subsp. japonica (Rice) protein is Respiratory burst oxidase homolog protein B (RBOHB).